Reading from the N-terminus, the 145-residue chain is D-aminoacyl-tRNA deacylase (145 aa).

The short motif at 137–138 (GP) is the Gly-cisPro motif, important for rejection of L-amino acids element.

The protein belongs to the DTD family. As to quaternary structure, homodimer.

The protein localises to the cytoplasm. It carries out the reaction glycyl-tRNA(Ala) + H2O = tRNA(Ala) + glycine + H(+). The enzyme catalyses a D-aminoacyl-tRNA + H2O = a tRNA + a D-alpha-amino acid + H(+). Its function is as follows. An aminoacyl-tRNA editing enzyme that deacylates mischarged D-aminoacyl-tRNAs. Also deacylates mischarged glycyl-tRNA(Ala), protecting cells against glycine mischarging by AlaRS. Acts via tRNA-based rather than protein-based catalysis; rejects L-amino acids rather than detecting D-amino acids in the active site. By recycling D-aminoacyl-tRNA to D-amino acids and free tRNA molecules, this enzyme counteracts the toxicity associated with the formation of D-aminoacyl-tRNA entities in vivo and helps enforce protein L-homochirality. This is D-aminoacyl-tRNA deacylase from Escherichia coli O81 (strain ED1a).